Here is a 531-residue protein sequence, read N- to C-terminus: T-complex protein 1 subunit zeta-2 (531 aa).

It belongs to the TCP-1 chaperonin family. Component of the chaperonin-containing T-complex (TRiC), a heterooligomeric complex of about 850 to 900 kDa that forms two stacked rings, 12 to 16 nm in diameter.

The protein localises to the cytoplasm. In terms of biological role, component of the chaperonin-containing T-complex (TRiC), a molecular chaperone complex that assists the folding of proteins upon ATP hydrolysis. The chain is T-complex protein 1 subunit zeta-2 (CCT6B) from Bos taurus (Bovine).